Reading from the N-terminus, the 194-residue chain is Mitochondrial import inner membrane translocase subunit Tim22 (194 aa).

2 disulfide bridges follow: cysteine 69-cysteine 141 and cysteine 160-cysteine 179. 3 consecutive transmembrane segments (helical) span residues 74–94 (ALAC…TAGI), 123–143 (MSYA…ECLI), and 170–190 (AGLK…AAID).

Belongs to the Tim17/Tim22/Tim23 family. In terms of assembly, component of the TIM22 complex, whose core is composed of TIMM22, associated with peripheral protein FXC1/TIMM10B and the 70 kDa heterohexamer. In most cases, the 70 kDa complex is composed of TIMM9 and TIMM10 (TIMM10A or TIMM10B). A small fraction of the 70 kDa complex is composed of TIMM8 (TIMM8A/DDP1 or TIMM8B/DDP2) and TIMM13. The TIM22 complex also contains AGK and TIMM29. Interacts directly with TIMM9, TIMM10A and FXC1/TIMM10B. Interacts (when oxidized) with TIMM29; interaction is direct. Disulfide bonds promote efficient assembly of the TIM22 complex.

It localises to the mitochondrion inner membrane. Its function is as follows. Essential core component of the TIM22 complex, a complex that mediates the import and insertion of multi-pass transmembrane proteins into the mitochondrial inner membrane. In the TIM22 complex, it constitutes the voltage-activated and signal-gated channel. Forms a twin-pore translocase that uses the membrane potential as external driving force in 2 voltage-dependent steps. The protein is Mitochondrial import inner membrane translocase subunit Tim22 (TIMM22) of Homo sapiens (Human).